Consider the following 475-residue polypeptide: Ribulose bisphosphate carboxylase large chain (475 aa).

The substrate site is built by asparagine 123 and threonine 173. Residue lysine 175 is the Proton acceptor of the active site. Lysine 177 lines the substrate pocket. Mg(2+) is bound by residues lysine 201, aspartate 203, and glutamate 204. Residue lysine 201 is modified to N6-carboxylysine. Histidine 294 serves as the catalytic Proton acceptor. The substrate site is built by arginine 295, histidine 327, and serine 379.

This sequence belongs to the RuBisCO large chain family. Type I subfamily. In terms of assembly, heterohexadecamer of 8 large chains and 8 small chains; disulfide-linked. The disulfide link is formed within the large subunit homodimers. Interacts with assembly factor Raf1 which helps form the holoenzyme, most interaction (and folding) occurs in the cytoplasm. The cofactor is Mg(2+). In terms of processing, the disulfide bond which can form in the large chain dimeric partners within the hexadecamer appears to be associated with oxidative stress and protein turnover.

It localises to the carboxysome. The protein localises to the cytoplasm. The enzyme catalyses 2 (2R)-3-phosphoglycerate + 2 H(+) = D-ribulose 1,5-bisphosphate + CO2 + H2O. The catalysed reaction is D-ribulose 1,5-bisphosphate + O2 = 2-phosphoglycolate + (2R)-3-phosphoglycerate + 2 H(+). In terms of biological role, ruBisCO catalyzes two reactions: the carboxylation of D-ribulose 1,5-bisphosphate, the primary event in carbon dioxide fixation, as well as the oxidative fragmentation of the pentose substrate in the photorespiration process. Both reactions occur simultaneously and in competition at the same active site. The sequence is that of Ribulose bisphosphate carboxylase large chain from Thermosynechococcus vestitus (strain NIES-2133 / IAM M-273 / BP-1).